We begin with the raw amino-acid sequence, 398 residues long: Elongation factor Tu (398 aa).

The region spanning 10 to 208 (KPHVNVGTIG…ALDSHIPEPT (199 aa)) is the tr-type G domain. The interval 19-26 (GHIDHGKT) is G1. 19–26 (GHIDHGKT) is a binding site for GTP. Residue Thr-26 coordinates Mg(2+). The G2 stretch occupies residues 60–64 (TKTVT). The tract at residues 83-86 (DCPG) is G3. GTP is bound by residues 83 to 87 (DCPGH) and 138 to 141 (NKCD). Positions 138-141 (NKCD) are G4. Residues 176–178 (SSL) are G5.

The protein belongs to the TRAFAC class translation factor GTPase superfamily. Classic translation factor GTPase family. EF-Tu/EF-1A subfamily. Monomer.

Its subcellular location is the cytoplasm. It carries out the reaction GTP + H2O = GDP + phosphate + H(+). Functionally, GTP hydrolase that promotes the GTP-dependent binding of aminoacyl-tRNA to the A-site of ribosomes during protein biosynthesis. The protein is Elongation factor Tu of Rhodopirellula baltica (strain DSM 10527 / NCIMB 13988 / SH1).